The sequence spans 506 residues: (+)-piperitol/(+)-sesamin synthase CYP81Q2 (506 aa).

Residues 3 to 23 form a helical membrane-spanning segment; it reads AEMLYSALALTFAIFMVYRIL. Position 439 (cysteine 439) interacts with heme.

This sequence belongs to the cytochrome P450 family. It depends on heme as a cofactor. As to expression, expressed in seeds.

It is found in the membrane. It catalyses the reaction (+)-piperitol + reduced [NADPH--hemoprotein reductase] + O2 = (+)-sesamin + oxidized [NADPH--hemoprotein reductase] + 2 H2O + H(+). The catalysed reaction is (+)-pinoresinol + reduced [NADPH--hemoprotein reductase] + O2 = (+)-piperitol + oxidized [NADPH--hemoprotein reductase] + 2 H2O + H(+). Involved in the biosynthesis of (+)-sesamin, a furofuran class lignan. Functions in a dual catalytic mode. Catalyzes the synthesis of (+)-sesamin from (+)- pinoresinol by formation of two successive methylenedioxy bridges on (+)-pinoresinol and (+)-piperitol, respectively. The protein is (+)-piperitol/(+)-sesamin synthase CYP81Q2 of Sesamum radiatum (Black benniseed).